A 372-amino-acid polypeptide reads, in one-letter code: Glutamate 5-kinase (372 aa).

K14 is a binding site for ATP. Substrate-binding residues include S54, D141, and N153. Residues 173–174 (TD) and 215–221 (SGGMLTK) each bind ATP. The PUA domain occupies 280–358 (AGKVVVDEGA…HEIEHILGYI (79 aa)).

Belongs to the glutamate 5-kinase family.

It localises to the cytoplasm. It carries out the reaction L-glutamate + ATP = L-glutamyl 5-phosphate + ADP. It participates in amino-acid biosynthesis; L-proline biosynthesis; L-glutamate 5-semialdehyde from L-glutamate: step 1/2. Its function is as follows. Catalyzes the transfer of a phosphate group to glutamate to form L-glutamate 5-phosphate. This Methylobacillus flagellatus (strain ATCC 51484 / DSM 6875 / VKM B-1610 / KT) protein is Glutamate 5-kinase.